Reading from the N-terminus, the 261-residue chain is DNA repair protein RecO (261 aa).

Belongs to the RecO family.

Involved in DNA repair and RecF pathway recombination. In Chlorobium limicola (strain DSM 245 / NBRC 103803 / 6330), this protein is DNA repair protein RecO.